A 314-amino-acid chain; its full sequence is MMGQNQTSISDFLLLGLPIQPEQQNLCYALFLAMYLTTLLGNLLIIVLIRLDSHLHTPMYLFLSNLSFSDLCFSSVTIPKLLQNMQNQDPSIPYADCLTQMYFFLLFGDLESFLLVAMAYDRYVAICFPLHYTAIMSPMLCLSVVALSWVLTTFHAMLHTLLMARLCFCADNVIPHFFCDMSALLKLACSDTRVNEWVIFIMGGLILVIPFLLILGSYARIVSSILKVPSSKGICKALSTCGSHLSVVSLFYGTVIGLYLCPSANSSTLKDTVMAMIYTVVTPMLNPFIYSLRNRDMKGALSRVIHQKKTFFSL.

Residues 1–25 (MMGQNQTSISDFLLLGLPIQPEQQN) are Extracellular-facing. An N-linked (GlcNAc...) asparagine glycan is attached at Asn5. The chain crosses the membrane as a helical span at residues 26–49 (LCYALFLAMYLTTLLGNLLIIVLI). Residues 50–57 (RLDSHLHT) are Cytoplasmic-facing. The helical transmembrane segment at 58 to 79 (PMYLFLSNLSFSDLCFSSVTIP) threads the bilayer. Over 80–100 (KLLQNMQNQDPSIPYADCLTQ) the chain is Extracellular. The cysteines at positions 97 and 189 are disulfide-linked. Residues 101–120 (MYFFLLFGDLESFLLVAMAY) form a helical membrane-spanning segment. Residues 121–139 (DRYVAICFPLHYTAIMSPM) lie on the Cytoplasmic side of the membrane. A helical membrane pass occupies residues 140-158 (LCLSVVALSWVLTTFHAML). Residues 159–195 (HTLLMARLCFCADNVIPHFFCDMSALLKLACSDTRVN) lie on the Extracellular side of the membrane. The helical transmembrane segment at 196-219 (EWVIFIMGGLILVIPFLLILGSYA) threads the bilayer. Residues 220–236 (RIVSSILKVPSSKGICK) lie on the Cytoplasmic side of the membrane. The chain crosses the membrane as a helical span at residues 237–259 (ALSTCGSHLSVVSLFYGTVIGLY). Residues 260–272 (LCPSANSSTLKDT) are Extracellular-facing. A helical membrane pass occupies residues 273 to 292 (VMAMIYTVVTPMLNPFIYSL). Residues 293 to 314 (RNRDMKGALSRVIHQKKTFFSL) are Cytoplasmic-facing.

This sequence belongs to the G-protein coupled receptor 1 family.

Its subcellular location is the cell membrane. Odorant receptor. This Pan troglodytes (Chimpanzee) protein is Olfactory receptor 1E1 (OR1E1).